The following is a 249-amino-acid chain: Probable transcriptional regulatory protein mll3945 (249 aa).

The protein belongs to the TACO1 family.

Its subcellular location is the cytoplasm. The chain is Probable transcriptional regulatory protein mll3945 from Mesorhizobium japonicum (strain LMG 29417 / CECT 9101 / MAFF 303099) (Mesorhizobium loti (strain MAFF 303099)).